Reading from the N-terminus, the 283-residue chain is ATP phosphoribosyltransferase (283 aa).

This sequence belongs to the ATP phosphoribosyltransferase family. Long subfamily. Equilibrium between an active dimeric form, an inactive hexameric form and higher aggregates. Interconversion between the various forms is largely reversible and is influenced by the natural substrates and inhibitors of the enzyme. Mg(2+) is required as a cofactor.

It localises to the cytoplasm. It carries out the reaction 1-(5-phospho-beta-D-ribosyl)-ATP + diphosphate = 5-phospho-alpha-D-ribose 1-diphosphate + ATP. The protein operates within amino-acid biosynthesis; L-histidine biosynthesis; L-histidine from 5-phospho-alpha-D-ribose 1-diphosphate: step 1/9. Feedback inhibited by histidine. Its function is as follows. Catalyzes the condensation of ATP and 5-phosphoribose 1-diphosphate to form N'-(5'-phosphoribosyl)-ATP (PR-ATP). Has a crucial role in the pathway because the rate of histidine biosynthesis seems to be controlled primarily by regulation of HisG enzymatic activity. The chain is ATP phosphoribosyltransferase from Mycobacterium sp. (strain JLS).